The sequence spans 368 residues: Phospho-N-acetylmuramoyl-pentapeptide-transferase (368 aa).

The next 9 helical transmembrane spans lie at 23–43 (YLTF…IFAG), 72–92 (VPTM…FLWA), 98–118 (HVWL…IDDY), 139–159 (VTLG…SVLL), 170–190 (LSVD…TAVS), 201–221 (GLAA…AYLC), 238–258 (AGEV…FLWF), 281–301 (VIAL…VFFV), and 345–365 (KIVI…LMTL).

Belongs to the glycosyltransferase 4 family. MraY subfamily. It depends on Mg(2+) as a cofactor.

Its subcellular location is the cell inner membrane. The enzyme catalyses UDP-N-acetyl-alpha-D-muramoyl-L-alanyl-gamma-D-glutamyl-meso-2,6-diaminopimeloyl-D-alanyl-D-alanine + di-trans,octa-cis-undecaprenyl phosphate = di-trans,octa-cis-undecaprenyl diphospho-N-acetyl-alpha-D-muramoyl-L-alanyl-D-glutamyl-meso-2,6-diaminopimeloyl-D-alanyl-D-alanine + UMP. It functions in the pathway cell wall biogenesis; peptidoglycan biosynthesis. Its function is as follows. Catalyzes the initial step of the lipid cycle reactions in the biosynthesis of the cell wall peptidoglycan: transfers peptidoglycan precursor phospho-MurNAc-pentapeptide from UDP-MurNAc-pentapeptide onto the lipid carrier undecaprenyl phosphate, yielding undecaprenyl-pyrophosphoryl-MurNAc-pentapeptide, known as lipid I. The chain is Phospho-N-acetylmuramoyl-pentapeptide-transferase from Chlorobaculum tepidum (strain ATCC 49652 / DSM 12025 / NBRC 103806 / TLS) (Chlorobium tepidum).